The sequence spans 386 residues: Glucose-1-phosphate adenylyltransferase (386 aa).

Residues Tyr100, Gly165, 180–181, and Ser191 contribute to the alpha-D-glucose 1-phosphate site; that span reads EK.

The protein belongs to the bacterial/plant glucose-1-phosphate adenylyltransferase family. Homotetramer.

The enzyme catalyses alpha-D-glucose 1-phosphate + ATP + H(+) = ADP-alpha-D-glucose + diphosphate. The protein operates within glycan biosynthesis; glycogen biosynthesis. Involved in the biosynthesis of ADP-glucose, a building block required for the elongation reactions to produce glycogen. Catalyzes the reaction between ATP and alpha-D-glucose 1-phosphate (G1P) to produce pyrophosphate and ADP-Glc. The polypeptide is Glucose-1-phosphate adenylyltransferase (Clostridium botulinum (strain Eklund 17B / Type B)).